A 78-amino-acid polypeptide reads, in one-letter code: Translation initiation factor IF-1, plastid (78 aa).

The 72-residue stretch at 1 to 72 folds into the S1-like domain; the sequence is MKKQDLIDME…TKGRITYRLR (72 aa).

Belongs to the IF-1 family. Component of the 30S ribosomal translation pre-initiation complex which assembles on the 30S ribosome in the order IF-2 and IF-3, IF-1 and N-formylmethionyl-tRNA(fMet); mRNA recruitment can occur at any time during PIC assembly.

It is found in the plastid. Its function is as follows. One of the essential components for the initiation of protein synthesis. Stabilizes the binding of IF-2 and IF-3 on the 30S subunit to which N-formylmethionyl-tRNA(fMet) subsequently binds. Helps modulate mRNA selection, yielding the 30S pre-initiation complex (PIC). Upon addition of the 50S ribosomal subunit IF-1, IF-2 and IF-3 are released leaving the mature 70S translation initiation complex. The polypeptide is Translation initiation factor IF-1, plastid (Aneura mirabilis (Parasitic liverwort)).